Reading from the N-terminus, the 269-residue chain is Shikimate dehydrogenase (NADP(+)) (269 aa).

Shikimate is bound by residues 22–24 and Thr-68; that span reads TLS. Catalysis depends on Lys-72, which acts as the Proton acceptor. Asn-93 and Asp-104 together coordinate shikimate. NADP(+) is bound by residues 128-132, 152-157, and Phe-210; these read GAGGA and NRTNLR. Tyr-212 provides a ligand contact to shikimate. Gly-233 provides a ligand contact to NADP(+).

It belongs to the shikimate dehydrogenase family. Homodimer.

It catalyses the reaction shikimate + NADP(+) = 3-dehydroshikimate + NADPH + H(+). Its pathway is metabolic intermediate biosynthesis; chorismate biosynthesis; chorismate from D-erythrose 4-phosphate and phosphoenolpyruvate: step 4/7. Its function is as follows. Involved in the biosynthesis of the chorismate, which leads to the biosynthesis of aromatic amino acids. Catalyzes the reversible NADPH linked reduction of 3-dehydroshikimate (DHSA) to yield shikimate (SA). The sequence is that of Shikimate dehydrogenase (NADP(+)) from Saccharolobus islandicus (strain L.S.2.15 / Lassen #1) (Sulfolobus islandicus).